We begin with the raw amino-acid sequence, 878 residues long: Alanine--tRNA ligase (878 aa).

Residues histidine 562, histidine 566, cysteine 670, and histidine 674 each coordinate Zn(2+).

Belongs to the class-II aminoacyl-tRNA synthetase family. The cofactor is Zn(2+).

The protein resides in the cytoplasm. The enzyme catalyses tRNA(Ala) + L-alanine + ATP = L-alanyl-tRNA(Ala) + AMP + diphosphate. Its function is as follows. Catalyzes the attachment of alanine to tRNA(Ala) in a two-step reaction: alanine is first activated by ATP to form Ala-AMP and then transferred to the acceptor end of tRNA(Ala). Also edits incorrectly charged Ser-tRNA(Ala) and Gly-tRNA(Ala) via its editing domain. This is Alanine--tRNA ligase from Acinetobacter baylyi (strain ATCC 33305 / BD413 / ADP1).